We begin with the raw amino-acid sequence, 272 residues long: MKTSVKFETIFPLTTAPLIQCITNEITCESMANALLYIDAKPIMADDPREFPQMFQQTSALVLNLGHLSQEREQSLLAASDYARQVNKLTVVDLVGYGASDIRNEVGEKLVHNQPTVVKGNLSEMRTFCQLVSHGRGVDGSPLDQSEEAIEELIQALRQQTQKFPQTVFLATGIQDVLVSQEQVIVLQNGVPELDCFTGTGDLVGALVAALLGEGNAPMTAAVAAVSYFNLCGEKAKTKSQGLADFRQNTLNQLSLLMKEKDWFEAVKGRVL.

A substrate-binding site is contributed by M44. Residues K119 and T172 each coordinate ATP. Substrate is bound at residue G199.

The protein belongs to the Thz kinase family. Mg(2+) is required as a cofactor.

The catalysed reaction is 5-(2-hydroxyethyl)-4-methylthiazole + ATP = 4-methyl-5-(2-phosphooxyethyl)-thiazole + ADP + H(+). Its pathway is cofactor biosynthesis; thiamine diphosphate biosynthesis; 4-methyl-5-(2-phosphoethyl)-thiazole from 5-(2-hydroxyethyl)-4-methylthiazole: step 1/1. Its function is as follows. Catalyzes the phosphorylation of the hydroxyl group of 4-methyl-5-beta-hydroxyethylthiazole (THZ). This chain is Hydroxyethylthiazole kinase, found in Enterococcus faecalis (strain ATCC 700802 / V583).